The chain runs to 504 residues: MSQFVDRVVLHLKAGDGGNGCNSVRREKFMPLGGPDGGNGGHGGDIVLEVDPQVHTLLDFRFSPHVRAERGNNGAGDDRHGARGKDLTLHVPPGTVVIDEDGEVLADLVSPGQKVIVAQGGFGGLGNASLASKTRKAPGFALLGEPGEQKDVTLELKSMADVGLVGFPSAGKSSLISVLSAAKPKIADYPFTTLAPNLGVVSVDHDTFTIADVPGLIPGASEGRGLGLDFLRHIERTAVLAHVVDAAALESERNPLDDIRALEHELDSYQSELSADAGLGDLRERPRVIILNKMDVPDAEDMADLQEEELKKFGWPIFRISTVARTGLNELRFALMDIVREHRKKVENTPEPQQVIRPQSVGPKRKGRFADFEVHEDKQNPGAFIVTGQKIDRWILQTDFENDEAIGFLADRLAKAGVEEALWQAGAVDGSEVTIGGITFEWDPQTVAGVDQTPAYGRGKDRRLEQTDRVTAEQRKRASQARRGLIDEYDYGDGEVAHTERWQG.

The Obg domain occupies 2–159; sequence SQFVDRVVLH…KDVTLELKSM (158 aa). The tract at residues 68–88 is disordered; sequence AERGNNGAGDDRHGARGKDLT. The region spanning 160-340 is the OBG-type G domain; it reads ADVGLVGFPS…LRFALMDIVR (181 aa). GTP is bound by residues 166 to 173, 191 to 195, 212 to 215, 292 to 295, and 321 to 323; these read GFPSAGKS, FTTLA, DVPG, NKMD, and STV. Mg(2+) contacts are provided by serine 173 and threonine 193. In terms of domain architecture, OCT spans 364 to 444; that stretch reads KRKGRFADFE…IGGITFEWDP (81 aa). The tract at residues 449–481 is disordered; that stretch reads GVDQTPAYGRGKDRRLEQTDRVTAEQRKRASQA. The segment covering 458–476 has biased composition (basic and acidic residues); the sequence is RGKDRRLEQTDRVTAEQRK.

Belongs to the TRAFAC class OBG-HflX-like GTPase superfamily. OBG GTPase family. In terms of assembly, monomer. The cofactor is Mg(2+).

It localises to the cytoplasm. In terms of biological role, an essential GTPase which binds GTP, GDP and possibly (p)ppGpp with moderate affinity, with high nucleotide exchange rates and a fairly low GTP hydrolysis rate. Plays a role in control of the cell cycle, stress response, ribosome biogenesis and in those bacteria that undergo differentiation, in morphogenesis control. The sequence is that of GTPase Obg from Corynebacterium urealyticum (strain ATCC 43042 / DSM 7109).